A 469-amino-acid chain; its full sequence is Small ribosomal subunit protein mS29 (469 aa).

Leucine 150 is a binding site for ATP.

It belongs to the mitochondrion-specific ribosomal protein mS29 family. As to quaternary structure, component of the mitochondrial small ribosomal subunit (mt-SSU). Mature N.crassa 74S mitochondrial ribosomes consist of a small (37S) and a large (54S) subunit. The 37S small subunit contains a 16S ribosomal RNA (16S mt-rRNA) and 32 different proteins. The 54S large subunit contains a 23S rRNA (23S mt-rRNA) and 42 different proteins.

The protein resides in the mitochondrion. In terms of biological role, component of the mitochondrial ribosome (mitoribosome), a dedicated translation machinery responsible for the synthesis of mitochondrial genome-encoded proteins, including at least some of the essential transmembrane subunits of the mitochondrial respiratory chain. The mitoribosomes are attached to the mitochondrial inner membrane and translation products are cotranslationally integrated into the membrane. This is Small ribosomal subunit protein mS29 (rsm23) from Neurospora crassa (strain ATCC 24698 / 74-OR23-1A / CBS 708.71 / DSM 1257 / FGSC 987).